The following is a 238-amino-acid chain: Succinate dehydrogenase iron-sulfur subunit (238 aa).

Residues 1–97 (MKLEFSIYRY…KIVIRPLPGL (97 aa)) form the 2Fe-2S ferredoxin-type domain. Positions 55, 60, and 75 each coordinate [2Fe-2S] cluster. In terms of domain architecture, 4Fe-4S ferredoxin-type spans 139-169 (QREKLDGLYECILCACCSTSCPSFWWNPDKF). Cys-149, Cys-152, and Cys-155 together coordinate [4Fe-4S] cluster. Cys-159 contacts [3Fe-4S] cluster. An a ubiquinone-binding site is contributed by Trp-164. Residues Cys-206 and Cys-212 each coordinate [3Fe-4S] cluster. Cys-216 is a binding site for [4Fe-4S] cluster.

The protein belongs to the succinate dehydrogenase/fumarate reductase iron-sulfur protein family. Part of an enzyme complex containing four subunits: a flavoprotein, an iron-sulfur, cytochrome b-556, and a hydrophobic anchor protein. [2Fe-2S] cluster serves as cofactor. Requires [3Fe-4S] cluster as cofactor. The cofactor is [4Fe-4S] cluster.

It catalyses the reaction a quinone + succinate = fumarate + a quinol. It functions in the pathway carbohydrate metabolism; tricarboxylic acid cycle; fumarate from succinate (bacterial route): step 1/1. Two distinct, membrane-bound, FAD-containing enzymes are responsible for the catalysis of fumarate and succinate interconversion; the fumarate reductase is used in anaerobic growth, and the succinate dehydrogenase is used in aerobic growth. The protein is Succinate dehydrogenase iron-sulfur subunit (sdhB) of Salmonella typhimurium (strain LT2 / SGSC1412 / ATCC 700720).